We begin with the raw amino-acid sequence, 494 residues long: V-type proton ATPase subunit B (494 aa).

Arg384 lines the ATP pocket.

Belongs to the ATPase alpha/beta chains family. In terms of assembly, V-ATPase is a heteromultimeric enzyme made up of two complexes: the ATP-hydrolytic V1 complex and the proton translocation V0 complex. The V1 complex consists of three catalytic AB heterodimers that form a heterohexamer, three peripheral stalks each consisting of EG heterodimers, one central rotor including subunits D and F, and the regulatory subunits C and H. The proton translocation complex V0 consists of the proton transport subunit a, a ring of proteolipid subunits c9c'', rotary subunit d, subunits e and f, and the accessory subunits VhaAC45 and ATP6AP2.

In terms of biological role, non-catalytic subunit of the V1 complex of vacuolar(H+)-ATPase (V-ATPase), a multisubunit enzyme composed of a peripheral complex (V1) that hydrolyzes ATP and a membrane integral complex (V0) that translocates protons. V-ATPase is responsible for acidifying and maintaining the pH of intracellular compartments and in some cell types, is targeted to the plasma membrane, where it is responsible for acidifying the extracellular environment. Essential for the proper assembly and activity of V-ATPase. The chain is V-type proton ATPase subunit B (VHA55) from Manduca sexta (Tobacco hawkmoth).